The chain runs to 532 residues: tRNA-2-methylthio-N(6)-dimethylallyladenosine synthase (532 aa).

The segment at 1-21 is disordered; that stretch reads MTSTVAHGAGSAGPADDVEPM. The 117-residue stretch at 24–140 folds into the MTTase N-terminal domain; that stretch reads RTYQVRTYGC…LPALLDRARH (117 aa). [4Fe-4S] cluster contacts are provided by cysteine 33, cysteine 69, cysteine 103, cysteine 177, cysteine 181, and cysteine 184. Residues 163–399 form the Radical SAM core domain; that stretch reads RESAYAAWVS…VELQEQISLE (237 aa). The TRAM domain occupies 402 to 470; that stretch reads RAIVGQRVEL…PHHLIADGGI (69 aa). The tract at residues 510–532 is disordered; that stretch reads TSCGSAGGCGSADGAGSSAGDPQ. Residues 523 to 532 are compositionally biased toward low complexity; the sequence is GAGSSAGDPQ.

It belongs to the methylthiotransferase family. MiaB subfamily. In terms of assembly, monomer. It depends on [4Fe-4S] cluster as a cofactor.

It localises to the cytoplasm. The enzyme catalyses N(6)-dimethylallyladenosine(37) in tRNA + (sulfur carrier)-SH + AH2 + 2 S-adenosyl-L-methionine = 2-methylsulfanyl-N(6)-dimethylallyladenosine(37) in tRNA + (sulfur carrier)-H + 5'-deoxyadenosine + L-methionine + A + S-adenosyl-L-homocysteine + 2 H(+). Its function is as follows. Catalyzes the methylthiolation of N6-(dimethylallyl)adenosine (i(6)A), leading to the formation of 2-methylthio-N6-(dimethylallyl)adenosine (ms(2)i(6)A) at position 37 in tRNAs that read codons beginning with uridine. This Mycobacterium ulcerans (strain Agy99) protein is tRNA-2-methylthio-N(6)-dimethylallyladenosine synthase.